The chain runs to 362 residues: MIDPFKRLARKGLFLFDPETAHGMSIAALKSGLVPACQITPDPRLRQTVAGLTFENPLGMAAGYDKNAEVPEALLRLGFGFTEIGTVTPRPQSGNPRPRIFRLVEDEAVINRLGFNNEGHEAAFERLSALTGKGVVGVNIGANKDSEDRITDYVAGIRCFYSVARYFTANISSPNTPGLRDLQARESLAALLSAVLAARDEMAERSGRKIPVFLKIAPDLTEEGMDDIAAEALAHPLDGLIVSNTTLSREGLKDQRQAKETGGLSGVPLFEKSTAVLARMRKRVGAALPIIGVGGVSSAETALEKIRAGADLVQLYSCMVYEGPGLPGNIVRGLSGLLDREKAGSIRELRDSRLDYWAARKV.

Residues 62–66 (AGYDK) and T86 each bind FMN. A substrate-binding site is contributed by K66. 111–115 (NRLGF) is a binding site for substrate. FMN-binding residues include N139 and N170. Substrate is bound at residue N170. Residue S173 is the Nucleophile of the active site. Residue N175 coordinates substrate. Residues K215 and S243 each contribute to the FMN site. A substrate-binding site is contributed by 244–245 (NT). FMN-binding positions include G266, G295, and 316 to 317 (YS).

The protein belongs to the dihydroorotate dehydrogenase family. Type 2 subfamily. In terms of assembly, monomer. The cofactor is FMN.

It is found in the cell membrane. It carries out the reaction (S)-dihydroorotate + a quinone = orotate + a quinol. It functions in the pathway pyrimidine metabolism; UMP biosynthesis via de novo pathway; orotate from (S)-dihydroorotate (quinone route): step 1/1. In terms of biological role, catalyzes the conversion of dihydroorotate to orotate with quinone as electron acceptor. This chain is Dihydroorotate dehydrogenase (quinone), found in Rhizobium etli (strain CIAT 652).